A 126-amino-acid chain; its full sequence is Small ribosomal subunit protein uS12 (126 aa).

D89 is subject to 3-methylthioaspartic acid.

Belongs to the universal ribosomal protein uS12 family. Part of the 30S ribosomal subunit. Contacts proteins S8 and S17. May interact with IF1 in the 30S initiation complex.

In terms of biological role, with S4 and S5 plays an important role in translational accuracy. Functionally, interacts with and stabilizes bases of the 16S rRNA that are involved in tRNA selection in the A site and with the mRNA backbone. Located at the interface of the 30S and 50S subunits, it traverses the body of the 30S subunit contacting proteins on the other side and probably holding the rRNA structure together. The combined cluster of proteins S8, S12 and S17 appears to hold together the shoulder and platform of the 30S subunit. This is Small ribosomal subunit protein uS12 from Carboxydothermus hydrogenoformans (strain ATCC BAA-161 / DSM 6008 / Z-2901).